We begin with the raw amino-acid sequence, 362 residues long: Chorismate synthase (362 aa).

Arg47 lines the NADP(+) pocket. Residues 124-126 (RSS), Gly286, 301-305 (KPTAT), and Arg327 contribute to the FMN site.

Belongs to the chorismate synthase family. As to quaternary structure, homotetramer. FMNH2 is required as a cofactor.

It catalyses the reaction 5-O-(1-carboxyvinyl)-3-phosphoshikimate = chorismate + phosphate. It participates in metabolic intermediate biosynthesis; chorismate biosynthesis; chorismate from D-erythrose 4-phosphate and phosphoenolpyruvate: step 7/7. Functionally, catalyzes the anti-1,4-elimination of the C-3 phosphate and the C-6 proR hydrogen from 5-enolpyruvylshikimate-3-phosphate (EPSP) to yield chorismate, which is the branch point compound that serves as the starting substrate for the three terminal pathways of aromatic amino acid biosynthesis. This reaction introduces a second double bond into the aromatic ring system. This Trichormus variabilis (strain ATCC 29413 / PCC 7937) (Anabaena variabilis) protein is Chorismate synthase.